The primary structure comprises 190 residues: Crossover junction endodeoxyribonuclease RuvC (190 aa).

Active-site residues include Asp-8, Glu-67, and Asp-139. Mg(2+)-binding residues include Asp-8, Glu-67, and Asp-139.

Belongs to the RuvC family. In terms of assembly, homodimer which binds Holliday junction (HJ) DNA. The HJ becomes 2-fold symmetrical on binding to RuvC with unstacked arms; it has a different conformation from HJ DNA in complex with RuvA. In the full resolvosome a probable DNA-RuvA(4)-RuvB(12)-RuvC(2) complex forms which resolves the HJ. Requires Mg(2+) as cofactor.

The protein resides in the cytoplasm. It carries out the reaction Endonucleolytic cleavage at a junction such as a reciprocal single-stranded crossover between two homologous DNA duplexes (Holliday junction).. Its function is as follows. The RuvA-RuvB-RuvC complex processes Holliday junction (HJ) DNA during genetic recombination and DNA repair. Endonuclease that resolves HJ intermediates. Cleaves cruciform DNA by making single-stranded nicks across the HJ at symmetrical positions within the homologous arms, yielding a 5'-phosphate and a 3'-hydroxyl group; requires a central core of homology in the junction. The consensus cleavage sequence is 5'-(A/T)TT(C/G)-3'. Cleavage occurs on the 3'-side of the TT dinucleotide at the point of strand exchange. HJ branch migration catalyzed by RuvA-RuvB allows RuvC to scan DNA until it finds its consensus sequence, where it cleaves and resolves the cruciform DNA. The protein is Crossover junction endodeoxyribonuclease RuvC of Haemophilus influenzae (strain PittEE).